The primary structure comprises 139 residues: NADPH-dependent 7-cyano-7-deazaguanine reductase (139 aa).

C34 serves as the catalytic Thioimide intermediate. D41 serves as the catalytic Proton donor. Substrate-binding positions include 56-58 (VEL) and 75-76 (HE).

The protein belongs to the GTP cyclohydrolase I family. QueF type 1 subfamily.

Its subcellular location is the cytoplasm. The enzyme catalyses 7-aminomethyl-7-carbaguanine + 2 NADP(+) = 7-cyano-7-deazaguanine + 2 NADPH + 3 H(+). It participates in tRNA modification; tRNA-queuosine biosynthesis. Functionally, catalyzes the NADPH-dependent reduction of 7-cyano-7-deazaguanine (preQ0) to 7-aminomethyl-7-deazaguanine (preQ1). The sequence is that of NADPH-dependent 7-cyano-7-deazaguanine reductase from Methylobacillus flagellatus (strain ATCC 51484 / DSM 6875 / VKM B-1610 / KT).